The following is a 378-amino-acid chain: Cyclic GMP-AMP synthase-like receptor 1 (378 aa).

Glu-71, Asp-73, and Asp-187 together coordinate Mg(2+). 71-73 serves as a coordination point for ATP; sequence EFD. GTP-binding positions include Asp-187 and 233 to 240; that span reads TSSFYEAE. ATP-binding positions include 237 to 240, Lys-258, and 271 to 275; these read YEAE and SYHIK.

It belongs to the mab-21 family. The cofactor is Mg(2+). It depends on Mn(2+) as a cofactor.

It carries out the reaction GTP + ATP = 3',2'-cGAMP + 2 diphosphate. The enzyme catalyses GTP + ATP = pppA(2'-5')pG + diphosphate. The catalysed reaction is pppA(2'-5')pG = 3',2'-cGAMP + diphosphate. The enzyme activity is specifically activated by double-stranded RNA (dsRNA). Recognizes long dsRNA (&gt;30 bp) with no preference for 5' RNA phosphorylation. Nucleotidyltransferase that catalyzes the formation of cyclic GMP-AMP (3',2'-cGAMP) from ATP and GTP and plays a key role in antiviral innate immunity. Synthesizes 3',2'-cGAMP in a two-step reaction through production of the linear intermediate pppA(2'-5')pG. Acts as a key sensor of double-stranded RNA (dsRNA), the presence of dsRNA in the cytoplasm being a danger signal that triggers the immune responses. Directly binds dsRNA, activating the nucleotidyltransferase activity, leading to synthesis of 3',2'-cGAMP, a second messenger that binds to and activates Sting, thereby triggering the antiviral immune response via activation of the NF-kappa-B transcription factor Rel (Relish). 3',2'-cGAMP is protected from poxin cleavage. In Drosophila melanogaster (Fruit fly), this protein is Cyclic GMP-AMP synthase-like receptor 1.